The following is a 448-amino-acid chain: Alpha-2B adrenergic receptor (448 aa).

Residues 1–12 (MDHQEPYSVQAT) are Extracellular-facing. A helical transmembrane segment spans residues 13–38 (AAIAAVITFLILFTIFGNALVILAVL). Over 39-49 (TSRSLPAPQNL) the chain is Cytoplasmic. Residues 50–75 (FLVSLAAADILVATLIIPFSLANELL) form a helical membrane-spanning segment. Topologically, residues 76–85 (GYWYFWRTWC) are extracellular. An intrachain disulfide couples C85 to C163. A helical membrane pass occupies residues 86 to 108 (EVYLALDVLFCTSSIVHLCAISL). Topologically, residues 109-130 (DRYWAVSRALEYNSKRTPRRIK) are cytoplasmic. The chain crosses the membrane as a helical span at residues 131 to 153 (CIILTVWLIAAVISLPPLIYKGD). The Extracellular segment spans residues 154 to 168 (QGPSPRGPQCKINQE). The chain crosses the membrane as a helical span at residues 169–192 (AWYILASSIGSFFAPCLIMILVYL). At 193-370 (RIYLIAKRSH…MTREKRFTFV (178 aa)) the chain is on the cytoplasmic side. A disordered region spans residues 203 to 326 (RRGPRAKGGP…PASMCSPSLQ (124 aa)). The span at 293–309 (AEEEAEEEEEEEGDECE) shows a compositional bias: acidic residues. The helical transmembrane segment at 371 to 394 (LAVVIGVFVLCWFPFFFTYSLGAI) threads the bilayer. Residues 395–403 (CPQHCKVPH) lie on the Extracellular side of the membrane. Residues 404–427 (GLFQFFFWIGYCNSSLNPVIYTIF) form a helical membrane-spanning segment. Residues 428–448 (NQDFRRAFRRILCRQWTQTAW) lie on the Cytoplasmic side of the membrane. C440 is lipidated: S-palmitoyl cysteine.

Belongs to the G-protein coupled receptor 1 family. Adrenergic receptor subfamily. ADRA2B sub-subfamily. As to quaternary structure, interacts with RAB26. Interacts with PPP1R9B.

It localises to the cell membrane. Its function is as follows. Alpha-2 adrenergic receptors mediate the catecholamine-induced inhibition of adenylate cyclase through the action of G proteins. This Cavia porcellus (Guinea pig) protein is Alpha-2B adrenergic receptor (ADRA2B).